We begin with the raw amino-acid sequence, 337 residues long: Leucine-rich repeat-containing protein 39 (337 aa).

LRR repeat units follow at residues 84-105 (QLQEWQLHRTGLLKIPEFIGRF), 107-128 (HLIVLDLSRNTISEIPRGIGLL), 130-152 (RLQELILSYNKIKTVPKELSNCT), 153-176 (SLEKLELAVNRDISDLPPELSKLL), 177-198 (KLTHLDLSMNQFTTIPHAVLDM), 200-221 (ALEWLDMGSNSLQQLPDSLDRM), 223-244 (SLHTLWLQRNEITCLPETIKNM), 246-267 (NLGTLVLSNNKLQDIPGCMEEM), and 269-290 (NLRFVNFRDNPLRLEVTLPPSD).

As to quaternary structure, interacts with MYH7 (via C-terminus). As to expression, expressed in heart and skeletal muscle.

It localises to the cytoplasm. It is found in the myofibril. Its subcellular location is the sarcomere. The protein localises to the m line. In terms of biological role, component of the sarcomeric M-band which plays a role in myocyte response to biomechanical stress. May regulate expression of other M-band proteins via an SRF-dependent pathway. Important for normal contractile function in heart. In Mus musculus (Mouse), this protein is Leucine-rich repeat-containing protein 39.